The chain runs to 90 residues: Small ribosomal subunit protein uS15c (90 aa).

This sequence belongs to the universal ribosomal protein uS15 family. Part of the 30S ribosomal subunit.

The protein localises to the plastid. It localises to the chloroplast. This is Small ribosomal subunit protein uS15c (rps15) from Panax ginseng (Korean ginseng).